Reading from the N-terminus, the 306-residue chain is Mitochondrial uncoupling protein 1 (306 aa).

Solcar repeat units follow at residues 9–102 (LSLP…VKNL), 112–203 (VPLS…VKET), and 212–296 (DNVV…AKKY). The next 6 helical transmembrane spans lie at 15–35 (FACSAFAACVGEVCTIPLDTA), 71–91 (LRSLWKGVVPGLHRQCLFGGL), 118–138 (ILAGLTTGALGIMVANPTDLV), 177–197 (TGLGPNVARNAIINAAELASY), 218–238 (ILSGLGAGFFAVCIGSPVDVV), and 269–289 (YKGFIPNFGRLGSWNVIMFLT).

It belongs to the mitochondrial carrier (TC 2.A.29) family. In terms of tissue distribution, widely expressed.

It is found in the mitochondrion inner membrane. In terms of biological role, PUMPS are mitochondrial transporter proteins that create proton leaks across the inner mitochondrial membrane, thus uncoupling oxidative phosphorylation. This leads to a decrease in the efficiency of oxidative phosphorylation and an increase in heat production. Is involved in protecting plant cells against oxidative stress damage and maintaining the redox balance of the mitochondrial electron transport chain to facilitate photosynthetic metabolism. May play a regulatory role during photorespiration. This chain is Mitochondrial uncoupling protein 1 (PUMP1), found in Arabidopsis thaliana (Mouse-ear cress).